Reading from the N-terminus, the 226-residue chain is Low-molecular weight cobalt-containing nitrile hydratase subunit beta (226 aa).

The tract at residues 1-22 (MDGIHDLGGRAGLGPIKPESDE) is disordered.

It belongs to the nitrile hydratase subunit beta family. Heterodimer of an alpha and a beta chain.

It carries out the reaction an aliphatic primary amide = an aliphatic nitrile + H2O. Functionally, NHase catalyzes the hydration of various nitrile compounds to the corresponding amides. The protein is Low-molecular weight cobalt-containing nitrile hydratase subunit beta of Rhodococcus rhodochrous.